The chain runs to 689 residues: UvrABC system protein B (689 aa).

A disordered region spans residues 1-26; it reads MSDASGPLQPDRPEADVPFRVEAPFD. In terms of domain architecture, Helicase ATP-binding spans 40 to 422; sequence AGYEQGAQQQ…ERAQSANVVE (383 aa). 53-60 is an ATP binding site; the sequence is GVTGSGKT. A Beta-hairpin motif is present at residues 106–129; sequence YYNYYQPEAYVEQTDKYIEKDASI. In terms of domain architecture, Helicase C-terminal spans 443-605; it reads QVEDLMDRID…TTPTTIEKAV (163 aa). Residues 632 to 667 enclose the UVR domain; sequence ALLVEDLEARMEDAASNLEFELAADIRDRMRELREA. The segment at 668–689 is disordered; sequence FDLDGGDAPEDPGGVAPETEDW.

It belongs to the UvrB family. Forms a heterotetramer with UvrA during the search for lesions. Interacts with UvrC in an incision complex.

The protein resides in the cytoplasm. Functionally, the UvrABC repair system catalyzes the recognition and processing of DNA lesions. A damage recognition complex composed of 2 UvrA and 2 UvrB subunits scans DNA for abnormalities. Upon binding of the UvrA(2)B(2) complex to a putative damaged site, the DNA wraps around one UvrB monomer. DNA wrap is dependent on ATP binding by UvrB and probably causes local melting of the DNA helix, facilitating insertion of UvrB beta-hairpin between the DNA strands. Then UvrB probes one DNA strand for the presence of a lesion. If a lesion is found the UvrA subunits dissociate and the UvrB-DNA preincision complex is formed. This complex is subsequently bound by UvrC and the second UvrB is released. If no lesion is found, the DNA wraps around the other UvrB subunit that will check the other stand for damage. This chain is UvrABC system protein B, found in Halobacterium salinarum (strain ATCC 700922 / JCM 11081 / NRC-1) (Halobacterium halobium).